The sequence spans 295 residues: Acetylglutamate kinase (295 aa).

Substrate-binding positions include 64-65, Arg86, and Asn190; that span reads GG.

It belongs to the acetylglutamate kinase family. ArgB subfamily.

The protein localises to the cytoplasm. It catalyses the reaction N-acetyl-L-glutamate + ATP = N-acetyl-L-glutamyl 5-phosphate + ADP. The protein operates within amino-acid biosynthesis; L-arginine biosynthesis; N(2)-acetyl-L-ornithine from L-glutamate: step 2/4. Catalyzes the ATP-dependent phosphorylation of N-acetyl-L-glutamate. The polypeptide is Acetylglutamate kinase (Heliobacterium modesticaldum (strain ATCC 51547 / Ice1)).